A 134-amino-acid chain; its full sequence is Interleukin-4 (134 aa).

The signal sequence occupies residues 1–23; the sequence is MGLTYQLLPALVCLLACTSFIQG. Cystine bridges form between Cys24-Cys133 and Cys48-Cys88. An N-linked (GlcNAc...) asparagine glycan is attached at Asn38. N-linked (GlcNAc...) asparagine glycosylation is present at Asn101.

Belongs to the IL-4/IL-13 family.

The protein localises to the secreted. Participates in at least several B-cell activation processes as well as of other cell types. It is a costimulator of DNA-synthesis. It induces the expression of class II MHC molecules on resting B-cells. It enhances both secretion and cell surface expression of IgE and IgG1. It also regulates the expression of the low affinity Fc receptor for IgE (CD23) on both lymphocytes and monocytes. Positively regulates IL31RA expression in macrophages. Stimulates autophagy in dendritic cells by interfering with mTORC1 signaling and through the induction of RUFY4. The polypeptide is Interleukin-4 (IL4) (Equus caballus (Horse)).